The sequence spans 207 residues: Ras-related protein Rab-8A (207 aa).

GTP-binding residues include Ser-17, Gly-18, Val-19, Gly-20, Lys-21, Thr-22, Cys-23, Ser-35, Ser-39, and Thr-40. Thr-22 contacts Mg(2+). 2 consecutive short sequence motifs (switch) follow at residues 31–45 (DAFNSTFISTIGIDF) and 63–80 (DTAGQERFRTITTAYYRG). 2 residues coordinate Mg(2+): Thr-40 and Asp-63. Gly-66 contacts GTP. Thr-72 is subject to Phosphothreonine. Positions 121, 122, 124, 152, and 153 each coordinate GTP. Residues Ser-181 and Ser-185 each carry the phosphoserine modification. A Cysteine methyl ester modification is found at Cys-204. Cys-204 carries the S-geranylgeranyl cysteine lipid modification. The propeptide at 205–207 (VLL) is removed in mature form.

Belongs to the small GTPase superfamily. Rab family. Interacts (GTP-bound form) with MICALL1; regulates RAB8A association with recycling endosomes. Interacts with MICALL2; competes with RAB13 and is involved in E-cadherin endocytic recycling. Interacts (GTP-bound form) with MICAL1, MICALCL, MICAL3, EHBP1 and EHBP1L1; at least in case of MICAL1, MICALCL, MICAL3 and EHBP1L1 two molecules of RAB8A can bind to one molecule of the effector protein; ternary complexes of RAB8A, RAB13 and either MICAL1 or EHBP1L1 are possible. Interacts with EHD1. Interacts with MAP4K2 and SYTL4. Interacts with SGSM1 and SGSM3. Interacts with RABIF, RIMS2, RPH3A and RPH3A. Interacts with OPTN. Interacts with RAB3IP, RAB3IP functions as guanine exchange factor (GEF). Interacts with MYO5B. Interacts with CIMAP3. Interacts with BIRC6/bruce. Interacts with OCRL. Interacts with AHI1. Interacts with DCDC1. Interacts with LRRK2; interaction facilitates phosphorylation of Thr-72. Interacts with RAB31P, GDI1, GDI2, CHM, CHML, RABGGTA, RABGGTB, TBC1D15 and INPP5B; these interactions are dependent on Thr-72 not being phosphorylated. Interacts with RILPL1 and RILPL2; these interactions are dependent on the phosphorylation of Thr-72 by LRRK2. Interacts with DZIP1; prevents inhibition by the GDP-dissociation inhibitor GDI2. Interacts (in GDP-bound form) with RAB3IP/Rabin8, RAB3IP functions as guanine exchange factor (GEF) towards RAB8A. Interacts (in GDP-bound form) with RPGR, RPGR functions as GEF towards RAB8A. Mg(2+) is required as a cofactor. Phosphorylation of Thr-72 in the switch II region by LRRK2 prevents the association of RAB regulatory proteins, including CHM, CHML and RAB GDP dissociation inhibitors GDI1 and GDI2. Phosphorylation by LRRK2 is required for localization to stressed lysosomes.

The protein resides in the cell membrane. It is found in the golgi apparatus. The protein localises to the endosome membrane. Its subcellular location is the recycling endosome membrane. It localises to the cell projection. The protein resides in the cilium. It is found in the cytoplasmic vesicle. The protein localises to the phagosome membrane. Its subcellular location is the cytoplasm. It localises to the cytoskeleton. The protein resides in the microtubule organizing center. It is found in the centrosome. The protein localises to the centriole. Its subcellular location is the cilium basal body. It localises to the midbody. The protein resides in the lysosome. The enzyme catalyses GTP + H2O = GDP + phosphate + H(+). With respect to regulation, regulated by guanine nucleotide exchange factors (GEFs) such as RAB3IP/Rabin8 and RPGR which promote the exchange of bound GDP for free GTP, GTPase activating proteins (GAPs) which increase the GTP hydrolysis activity, and GDP dissociation inhibitors (GDIs) which inhibit the dissociation of the nucleotide from the GTPase. Activated in response to insulin. In terms of biological role, the small GTPases Rab are key regulators of intracellular membrane trafficking, from the formation of transport vesicles to their fusion with membranes. Rabs cycle between an inactive GDP-bound form and an active GTP-bound form that is able to recruit to membranes different sets of downstream effectors directly responsible for vesicle formation, movement, tethering and fusion. RAB8A is involved in polarized vesicular trafficking and neurotransmitter release. Together with RAB11A, RAB3IP, the exocyst complex, PARD3, PRKCI, ANXA2, CDC42 and DNMBP promotes transcytosis of PODXL to the apical membrane initiation sites (AMIS), apical surface formation and lumenogenesis. Regulates the compacted morphology of the Golgi. Together with MYO5B and RAB11A participates in epithelial cell polarization. Also involved in membrane trafficking to the cilium and ciliogenesis. Together with MICALL2, may also regulate adherens junction assembly. May play a role in insulin-induced transport to the plasma membrane of the glucose transporter GLUT4 and therefore play a role in glucose homeostasis. Involved in autophagy. Participates in the export of a subset of neosynthesized proteins through a Rab8-Rab10-Rab11-dependent endososomal export route. Targeted to and stabilized on stressed lysosomes through LRRK2 phosphorylation. Suppresses stress-induced lysosomal enlargement through EHBP1 and EHNP1L1 effector proteins. The chain is Ras-related protein Rab-8A (RAB8A) from Canis lupus familiaris (Dog).